A 138-amino-acid chain; its full sequence is Large ribosomal subunit protein uL16 (138 aa).

Belongs to the universal ribosomal protein uL16 family. In terms of assembly, part of the 50S ribosomal subunit.

In terms of biological role, binds 23S rRNA and is also seen to make contacts with the A and possibly P site tRNAs. In Corynebacterium kroppenstedtii (strain DSM 44385 / JCM 11950 / CIP 105744 / CCUG 35717), this protein is Large ribosomal subunit protein uL16.